The following is a 119-amino-acid chain: Large ribosomal subunit protein bL20 (119 aa).

The protein belongs to the bacterial ribosomal protein bL20 family.

Functionally, binds directly to 23S ribosomal RNA and is necessary for the in vitro assembly process of the 50S ribosomal subunit. It is not involved in the protein synthesizing functions of that subunit. This chain is Large ribosomal subunit protein bL20, found in Enterococcus faecalis (strain ATCC 700802 / V583).